A 403-amino-acid chain; its full sequence is Soluble calcium-activated nucleotidase 1 (403 aa).

The Cytoplasmic segment spans residues 1–44 (MPIQPFDQREWNEPMHSLRISVGGLPVLASMTKATDPRFRPRWR). Residues 45–61 (VILTSFVGAALLWLLYS) form a helical; Signal-anchor for type II membrane protein membrane-spanning segment. The Lumenal segment spans residues 62-403 (HHQGPVPGRP…TVKYEGIEFI (342 aa)). Asn-90 carries an N-linked (GlcNAc...) asparagine glycan. The Ca(2+) site is built by Ser-170, Asp-171, Glu-217, Glu-286, Ser-347, and Glu-398.

It belongs to the apyrase family. Monomer. Homodimer; dimerization is Ca(2+)-dependent. It depends on Ca(2+) as a cofactor.

The protein localises to the endoplasmic reticulum membrane. It is found in the golgi apparatus. It localises to the golgi stack membrane. It carries out the reaction a ribonucleoside 5'-diphosphate + H2O = a ribonucleoside 5'-phosphate + phosphate + H(+). In terms of biological role, calcium-dependent nucleotidase with a preference for UDP. The order of activity with different substrates is UDP &gt; GDP &gt; IDP &gt;&gt; UTP &gt; CDP = GTP = ITP. Has very low activity towards ADP and even lower activity towards ATP. Does not hydrolyze AMP and GMP. Involved in proteoglycan synthesis. The protein is Soluble calcium-activated nucleotidase 1 (Cant1) of Mus musculus (Mouse).